We begin with the raw amino-acid sequence, 551 residues long: E3 ubiquitin-protein ligase TRIM8 (551 aa).

The segment at 15–56 (CPICLHVFVEPVQLPCKHNFCRGCIGEAWAKDSGLVRCPECN) adopts an RING-type zinc-finger fold. B box-type zinc fingers lie at residues 92–132 (CVFC…ARGH) and 140–182 (VRAW…VCDV). A coiled-coil region spans residues 181 to 249 (DVEIRRNEIR…HQLLDEDLRQ (69 aa)).

The protein belongs to the TRIM/RBCC family. In terms of assembly, homodimer. Interacts with SOCS1 (via) SH2 domain and SOCS box. Interacts with HSP90AB1; prevents nucleus translocation of phosphorylated STAT3 and HSP90AB1. Interacts with MAP3K7/TAK1. Interacts with PIAS3. Interacts with TICAM1. Interacts with TRIM15; this interaction prevents TRIM8 cytoplasmic translocation. As to expression, widely expressed. Expressed in glomerular podocytes of kidneys.

The protein localises to the cytoplasm. It localises to the nucleus. The protein resides in the nuclear body. It carries out the reaction S-ubiquitinyl-[E2 ubiquitin-conjugating enzyme]-L-cysteine + [acceptor protein]-L-lysine = [E2 ubiquitin-conjugating enzyme]-L-cysteine + N(6)-ubiquitinyl-[acceptor protein]-L-lysine.. It participates in protein modification; protein ubiquitination. In terms of biological role, E3 ubiquitin-protein ligase that participates in multiple biological processes including cell survival, differentiation, apoptosis, and in particular, the innate immune response. Participates in the activation of interferon-gamma signaling by promoting proteasomal degradation of the repressor SOCS1. Plays a positive role in the TNFalpha and IL-1beta signaling pathways. Mechanistically, induces the 'Lys-63'-linked polyubiquitination of MAP3K7/TAK1 component leading to the activation of NF-kappa-B. Also modulates STAT3 activity through negative regulation of PIAS3, either by degradation of PIAS3 through the ubiquitin-proteasome pathway or exclusion of PIAS3 from the nucleus. Negatively regulates TLR3/4-mediated innate immune response by catalyzing 'Lys-6'- and 'Lys-33'-linked polyubiquitination of TICAM1 and thereby disrupting the TICAM1-TBK1 interaction. The sequence is that of E3 ubiquitin-protein ligase TRIM8 (TRIM8) from Homo sapiens (Human).